A 522-amino-acid polypeptide reads, in one-letter code: Peptide chain release factor 3 (522 aa).

One can recognise a tr-type G domain in the interval 9–276 (KKRRTFAIIS…SFVNLAPAPQ (268 aa)). Residues 18–25 (SHPDAGKT), 86–90 (DTPGH), and 140–143 (NKLD) contribute to the GTP site.

The protein belongs to the TRAFAC class translation factor GTPase superfamily. Classic translation factor GTPase family. PrfC subfamily.

The protein resides in the cytoplasm. Increases the formation of ribosomal termination complexes and stimulates activities of RF-1 and RF-2. It binds guanine nucleotides and has strong preference for UGA stop codons. It may interact directly with the ribosome. The stimulation of RF-1 and RF-2 is significantly reduced by GTP and GDP, but not by GMP. In Lactobacillus johnsonii (strain CNCM I-12250 / La1 / NCC 533), this protein is Peptide chain release factor 3.